The chain runs to 251 residues: Triosephosphate isomerase (251 aa).

9 to 11 contributes to the substrate binding site; it reads NWK. The active-site Electrophile is His95. Glu167 acts as the Proton acceptor in catalysis. Residues Gly173, Ser212, and 233–234 contribute to the substrate site; that span reads GG.

This sequence belongs to the triosephosphate isomerase family. In terms of assembly, homodimer.

Its subcellular location is the cytoplasm. The catalysed reaction is D-glyceraldehyde 3-phosphate = dihydroxyacetone phosphate. It functions in the pathway carbohydrate biosynthesis; gluconeogenesis. The protein operates within carbohydrate degradation; glycolysis; D-glyceraldehyde 3-phosphate from glycerone phosphate: step 1/1. Its function is as follows. Involved in the gluconeogenesis. Catalyzes stereospecifically the conversion of dihydroxyacetone phosphate (DHAP) to D-glyceraldehyde-3-phosphate (G3P). In Pseudomonas putida (strain W619), this protein is Triosephosphate isomerase.